The chain runs to 119 residues: RIIa domain-containing protein 1 (119 aa).

The region spanning 70-104 is the RIIa domain; it reads KEVSLLISGFFREMFLKRPDNILEFAAHYFTDPRL.

In terms of tissue distribution, abundant in tissues rich in highly ciliated cells, such as testis, trachea and olfactory epithelium.

The chain is RIIa domain-containing protein 1 (Riiad1) from Mus musculus (Mouse).